The sequence spans 343 residues: Tribbles homolog 2 (343 aa).

The interval 25–50 (EELSSIRSAEPSQSFSPNLGSPSPPE) is disordered. A compositionally biased stretch (polar residues) spans 29–45 (SIRSAEPSQSFSPNLGS). The region spanning 61-308 (IGKYLLLEPL…SQEILDHPWF (248 aa)) is the Protein kinase domain.

It belongs to the protein kinase superfamily. CAMK Ser/Thr protein kinase family. Tribbles subfamily. Highly expressed in the thyroid, also present in ovary and cerebrum.

It is found in the cytoplasm. Its subcellular location is the cytoskeleton. In terms of biological role, interacts with MAPK kinases and regulates activation of MAP kinases. Does not display kinase activity. The chain is Tribbles homolog 2 from Canis lupus familiaris (Dog).